We begin with the raw amino-acid sequence, 257 residues long: Zinc finger protein 8 (257 aa).

Disordered stretches follow at residues 48-92 (GDNS…NNNN), 108-128 (QALG…KRGS), and 214-238 (GVYS…PNNW). A compositionally biased stretch (polar residues) spans 50–65 (NSDNLSAEPSDHQTTT). Positions 66-92 (KNDESSENIKDKDKEKDKDKDKDNNNN) are enriched in basic and acidic residues. The C2H2-type zinc-finger motif lies at 95–117 (FECHYCFRNFPTSQALGGHQNAH). A compositionally biased stretch (basic residues) spans 115 to 126 (NAHKRERQHAKR).

As to expression, expressed in developing cauline leaves.

It localises to the nucleus. In terms of biological role, probable transcription factor required for the initiation of inflorescence trichomes in response to gibberellin and cytokinin. Is not involved in the regulation of trichome branching. Is functionally equivalent to GIS2. Acts as a negative regulator of abscisic acid (ABA) signaling during germination and early seedling development. The protein is Zinc finger protein 8 of Arabidopsis thaliana (Mouse-ear cress).